The primary structure comprises 419 residues: Tyrosine--tRNA ligase (419 aa).

Residue tyrosine 34 participates in L-tyrosine binding. A 'HIGH' region motif is present at residues 39-48 (PSGDSMHIGH). L-tyrosine is bound by residues tyrosine 168 and glutamine 172. Residues 230-234 (KFGKS) carry the 'KMSKS' region motif. An ATP-binding site is contributed by lysine 233. An S4 RNA-binding domain is found at 352–418 (ANLVDWLVTL…GKKKYFLVSY (67 aa)).

The protein belongs to the class-I aminoacyl-tRNA synthetase family. TyrS type 1 subfamily. As to quaternary structure, homodimer.

Its subcellular location is the cytoplasm. The enzyme catalyses tRNA(Tyr) + L-tyrosine + ATP = L-tyrosyl-tRNA(Tyr) + AMP + diphosphate + H(+). Functionally, catalyzes the attachment of tyrosine to tRNA(Tyr) in a two-step reaction: tyrosine is first activated by ATP to form Tyr-AMP and then transferred to the acceptor end of tRNA(Tyr). This is Tyrosine--tRNA ligase from Listeria monocytogenes serotype 4b (strain F2365).